A 661-amino-acid polypeptide reads, in one-letter code: Peroxisomal acyl-coenzyme A oxidase 1 (661 aa).

A Phosphoserine modification is found at S26. Residue K65 is modified to N6-acetyllysine. K89 and K90 each carry N6-succinyllysine. An FAD-binding site is contributed by T139. Residue K159 is modified to N6-succinyllysine. G178 is an FAD binding site. K216 carries the post-translational modification N6-acetyllysine. K241 carries the N6-succinyllysine modification. 3 positions are modified to N6-acetyllysine: K255, K267, and K272. K349 carries the post-translational modification N6-succinyllysine. The active-site Proton acceptor is the E421. An N6-acetyllysine; alternate mark is found at K437 and K446. N6-succinyllysine; alternate occurs at positions 437 and 446. At K500 the chain carries N6-acetyllysine. K512 bears the N6-acetyllysine; alternate mark. K512 carries the post-translational modification N6-succinyllysine; alternate. The residue at position 542 (K542) is an N6-succinyllysine. K637 carries the post-translational modification N6-acetyllysine; alternate. Position 637 is an N6-succinyllysine; alternate (K637). Residue K643 is modified to N6-succinyllysine. S649 carries the phosphoserine modification. The residue at position 652 (K652) is an N6-acetyllysine. N6-succinyllysine is present on K655. The short motif at 659–661 is the Microbody targeting signal element; that stretch reads SKL.

It belongs to the acyl-CoA oxidase family. Homodimer. Interacts with LONP2. Requires FAD as cofactor. Highest levels of isoform 1 are found in liver and kidney while highest levels of isoform 2 are found in white adipose tissue. Isoform 1 is expressed at higher levels than isoform 2 in liver and kidney while isoform 2 is expressed at higher levels in brain, heart, lung, muscle, white adipose tissue and testis.

Its subcellular location is the peroxisome. It catalyses the reaction a 2,3-saturated acyl-CoA + O2 = a (2E)-enoyl-CoA + H2O2. The enzyme catalyses hexadecanoyl-CoA + O2 = (2E)-hexadecenoyl-CoA + H2O2. The catalysed reaction is dodecanoyl-CoA + O2 = (2E)-dodecenoyl-CoA + H2O2. It carries out the reaction octanoyl-CoA + O2 = (2E)-octenoyl-CoA + H2O2. It catalyses the reaction decanoyl-CoA + O2 = (2E)-decenoyl-CoA + H2O2. The enzyme catalyses tetradecanoyl-CoA + O2 = (2E)-tetradecenoyl-CoA + H2O2. The catalysed reaction is hexadecanedioyl-CoA + O2 = (2E)-hexadecenedioyl-CoA + H2O2. It carries out the reaction tetracosanoyl-CoA + O2 = (2E)-tetracosenoyl-CoA + H2O2. It catalyses the reaction glutaryl-CoA + O2 = (2E)-glutaconyl-CoA + H2O2. The enzyme catalyses hexanoyl-CoA + O2 = (2E)-hexenoyl-CoA + H2O2. The catalysed reaction is octadecanoyl-CoA + O2 = (2E)-octadecenoyl-CoA + H2O2. It carries out the reaction (5Z,8Z,11Z,14Z,17Z)-eicosapentaenoyl-CoA + O2 = (2E,5Z,8Z,11Z,14Z,17Z)-icosahexaenoyl-CoA + H2O2. It catalyses the reaction (6Z,9Z,12Z,15Z,18Z,21Z)-tetracosahexaenoyl-CoA + O2 = (2E,6Z,9Z,12Z,15Z,18Z,21Z)-tetracosaheptaenoyl-CoA + H2O2. Its pathway is lipid metabolism; peroxisomal fatty acid beta-oxidation. Functionally, involved in the initial and rate-limiting step of peroxisomal beta-oxidation of straight-chain saturated and unsaturated very-long-chain fatty acids. Catalyzes the desaturation of fatty acyl-CoAs such as palmitoyl-CoA (hexadecanoyl-CoA) to 2-trans-enoyl-CoAs ((2E)-enoyl-CoAs) such as (2E)-hexadecenoyl-CoA, and donates electrons directly to molecular oxygen (O(2)), thereby producing hydrogen peroxide (H(2)O(2)). Its function is as follows. Shows highest activity against medium-chain fatty acyl-CoAs. Shows optimum activity with a chain length of 10 carbons (decanoyl-CoA) in vitro. Is active against a much broader range of substrates and shows activity towards long-chain acyl-CoAs. The sequence is that of Peroxisomal acyl-coenzyme A oxidase 1 from Mus musculus (Mouse).